The following is a 111-amino-acid chain: Cytochrome c (111 aa).

Ala-1 is modified (N-acetylalanine). Heme c is bound by residues Cys-22, Cys-25, and His-26. Lys-80 is subject to N6,N6,N6-trimethyllysine. Met-88 is a binding site for heme c. Residue Lys-94 is modified to N6,N6,N6-trimethyllysine.

This sequence belongs to the cytochrome c family. Binds 1 heme c group covalently per subunit.

The protein localises to the mitochondrion intermembrane space. Electron carrier protein. The oxidized form of the cytochrome c heme group can accept an electron from the heme group of the cytochrome c1 subunit of cytochrome reductase. Cytochrome c then transfers this electron to the cytochrome oxidase complex, the final protein carrier in the mitochondrial electron-transport chain. This chain is Cytochrome c, found in Guizotia abyssinica (Niger).